The following is a 394-amino-acid chain: Elongation factor Tu 1 (394 aa).

Positions lysine 10 to glutamate 204 constitute a tr-type G domain. Residues glycine 19–threonine 26 form a G1 region. Glycine 19–threonine 26 contacts GTP. A Mg(2+)-binding site is contributed by threonine 26. The G2 stretch occupies residues glycine 60 to asparagine 64. Residues aspartate 81–glycine 84 are G3. GTP-binding positions include aspartate 81 to histidine 85 and asparagine 136 to aspartate 139. The tract at residues asparagine 136–aspartate 139 is G4. Residues serine 174 to leucine 176 are G5.

The protein belongs to the TRAFAC class translation factor GTPase superfamily. Classic translation factor GTPase family. EF-Tu/EF-1A subfamily. Monomer.

The protein localises to the cytoplasm. It carries out the reaction GTP + H2O = GDP + phosphate + H(+). GTP hydrolase that promotes the GTP-dependent binding of aminoacyl-tRNA to the A-site of ribosomes during protein biosynthesis. The polypeptide is Elongation factor Tu 1 (Shigella flexneri serotype 5b (strain 8401)).